An 804-amino-acid chain; its full sequence is Leucine--tRNA ligase (804 aa).

The 'HIGH' region signature appears at 40–51; it reads PYPSGAGLHVGH. The 'KMSKS' region motif lies at 576–580; the sequence is KMSKS. Lys-579 is an ATP binding site.

This sequence belongs to the class-I aminoacyl-tRNA synthetase family.

Its subcellular location is the cytoplasm. The catalysed reaction is tRNA(Leu) + L-leucine + ATP = L-leucyl-tRNA(Leu) + AMP + diphosphate. This chain is Leucine--tRNA ligase, found in Staphylococcus saprophyticus subsp. saprophyticus (strain ATCC 15305 / DSM 20229 / NCIMB 8711 / NCTC 7292 / S-41).